The following is a 901-amino-acid chain: Putative serine/threonine-protein kinase YPL150W (901 aa).

In terms of domain architecture, Protein kinase spans tyrosine 41 to leucine 287. ATP-binding positions include isoleucine 47–valine 55 and lysine 70. Residue aspartate 157 is the Proton acceptor of the active site. Position 456 is a phosphoserine (serine 456). Positions alanine 500 to serine 530 are disordered. Serine 533 carries the phosphoserine modification. Residues serine 588–threonine 599 show a composition bias toward low complexity. Disordered regions lie at residues serine 588–leucine 629 and threonine 745–arginine 770. A compositionally biased stretch (polar residues) spans glycine 600–isoleucine 613. Residues arginine 759–arginine 770 are compositionally biased toward basic residues.

It belongs to the protein kinase superfamily. Ser/Thr protein kinase family.

The enzyme catalyses L-seryl-[protein] + ATP = O-phospho-L-seryl-[protein] + ADP + H(+). It catalyses the reaction L-threonyl-[protein] + ATP = O-phospho-L-threonyl-[protein] + ADP + H(+). Putative serine/threonine-protein kinase. The chain is Putative serine/threonine-protein kinase YPL150W from Saccharomyces cerevisiae (strain ATCC 204508 / S288c) (Baker's yeast).